A 407-amino-acid polypeptide reads, in one-letter code: Carbamoyl phosphate synthase small chain (407 aa).

The tract at residues 1–205 (MTETTPKTAP…LQDGYGEQDA (205 aa)) is CPSase. Residues Ser60, Gly257, and Gly259 each coordinate L-glutamine. The Glutamine amidotransferase type-1 domain occupies 209-397 (HVVALDFGVK…INLIRERKGQ (189 aa)). Cys286 serves as the catalytic Nucleophile. L-glutamine is bound by residues Leu287, Gln290, Asn328, Gly330, and Phe331. Residues His370 and Glu372 contribute to the active site.

Belongs to the CarA family. Composed of two chains; the small (or glutamine) chain promotes the hydrolysis of glutamine to ammonia, which is used by the large (or ammonia) chain to synthesize carbamoyl phosphate. Tetramer of heterodimers (alpha,beta)4.

It catalyses the reaction hydrogencarbonate + L-glutamine + 2 ATP + H2O = carbamoyl phosphate + L-glutamate + 2 ADP + phosphate + 2 H(+). It carries out the reaction L-glutamine + H2O = L-glutamate + NH4(+). It functions in the pathway amino-acid biosynthesis; L-arginine biosynthesis; carbamoyl phosphate from bicarbonate: step 1/1. The protein operates within pyrimidine metabolism; UMP biosynthesis via de novo pathway; (S)-dihydroorotate from bicarbonate: step 1/3. Its function is as follows. Small subunit of the glutamine-dependent carbamoyl phosphate synthetase (CPSase). CPSase catalyzes the formation of carbamoyl phosphate from the ammonia moiety of glutamine, carbonate, and phosphate donated by ATP, constituting the first step of 2 biosynthetic pathways, one leading to arginine and/or urea and the other to pyrimidine nucleotides. The small subunit (glutamine amidotransferase) binds and cleaves glutamine to supply the large subunit with the substrate ammonia. The polypeptide is Carbamoyl phosphate synthase small chain (Brucella canis (strain ATCC 23365 / NCTC 10854 / RM-666)).